The chain runs to 512 residues: Histidine ammonia-lyase (512 aa).

The 5-imidazolinone (Ala-Gly) cross-link spans 144 to 146; sequence ASG. The residue at position 145 (Ser145) is a 2,3-didehydroalanine (Ser).

This sequence belongs to the PAL/histidase family. Post-translationally, contains an active site 4-methylidene-imidazol-5-one (MIO), which is formed autocatalytically by cyclization and dehydration of residues Ala-Ser-Gly.

It is found in the cytoplasm. The enzyme catalyses L-histidine = trans-urocanate + NH4(+). It participates in amino-acid degradation; L-histidine degradation into L-glutamate; N-formimidoyl-L-glutamate from L-histidine: step 1/3. This chain is Histidine ammonia-lyase, found in Desulfotalea psychrophila (strain LSv54 / DSM 12343).